The chain runs to 166 residues: CDP-archaeol synthase (166 aa).

4 consecutive transmembrane segments (helical) span residues 42-62, 73-93, 103-123, and 128-148; these read LVLG…VQDA, VLSV…KSFV, AAWP…LLLI, and FAAV…TPLL.

Belongs to the CDP-archaeol synthase family. Mg(2+) serves as cofactor.

The protein resides in the cell membrane. It catalyses the reaction 2,3-bis-O-(geranylgeranyl)-sn-glycerol 1-phosphate + CTP + H(+) = CDP-2,3-bis-O-(geranylgeranyl)-sn-glycerol + diphosphate. Its pathway is membrane lipid metabolism; glycerophospholipid metabolism. Functionally, catalyzes the formation of CDP-2,3-bis-(O-geranylgeranyl)-sn-glycerol (CDP-archaeol) from 2,3-bis-(O-geranylgeranyl)-sn-glycerol 1-phosphate (DGGGP) and CTP. This reaction is the third ether-bond-formation step in the biosynthesis of archaeal membrane lipids. In Methanosphaerula palustris (strain ATCC BAA-1556 / DSM 19958 / E1-9c), this protein is CDP-archaeol synthase.